Here is a 430-residue protein sequence, read N- to C-terminus: UDP-N-acetylglucosamine 1-carboxyvinyltransferase 1 (430 aa).

22–23 (KN) is a binding site for phosphoenolpyruvate. UDP-N-acetyl-alpha-D-glucosamine is bound at residue R93. The Proton donor role is filled by C117. C117 is modified (2-(S-cysteinyl)pyruvic acid O-phosphothioketal). UDP-N-acetyl-alpha-D-glucosamine contacts are provided by residues 122–126 (RPVDL), D305, and V327.

It belongs to the EPSP synthase family. MurA subfamily.

Its subcellular location is the cytoplasm. The enzyme catalyses phosphoenolpyruvate + UDP-N-acetyl-alpha-D-glucosamine = UDP-N-acetyl-3-O-(1-carboxyvinyl)-alpha-D-glucosamine + phosphate. Its pathway is cell wall biogenesis; peptidoglycan biosynthesis. Functionally, cell wall formation. Adds enolpyruvyl to UDP-N-acetylglucosamine. The protein is UDP-N-acetylglucosamine 1-carboxyvinyltransferase 1 of Listeria innocua serovar 6a (strain ATCC BAA-680 / CLIP 11262).